The sequence spans 132 residues: UPF0292 protein PH1700 (132 aa).

Residues 20–100 enclose the Toprim domain; sequence EGAIIVEGAR…KVDTETRREL (81 aa). The Mg(2+) site is built by glutamate 26, aspartate 69, and aspartate 71.

This sequence belongs to the UPF0292 family. Mg(2+) serves as cofactor.

The polypeptide is UPF0292 protein PH1700 (Pyrococcus horikoshii (strain ATCC 700860 / DSM 12428 / JCM 9974 / NBRC 100139 / OT-3)).